The sequence spans 985 residues: Coiled-coil domain-containing protein 33 (985 aa).

The tract at residues 228 to 263 (MSPFSTDSDQEGLSWEAGPWQHPAQVPEEPQGRLDT) is disordered. The 136-residue stretch at 263–398 (TSQDPYPAAN…VFLRGVNEPL (136 aa)) folds into the C2 domain. Residues 599 to 745 (VEMNNYRRAM…LEERLCERKE (147 aa)) adopt a coiled-coil conformation. The tract at residues 821 to 842 (AERLQDTNGPGHPKSTETLPAQ) is disordered. Residues 885-928 (DKFNLLAKLEQAQSRILSLENQLEESARHWAREKQNLAIRLQEQ) adopt a coiled-coil conformation. A disordered region spans residues 931 to 985 (GFGQPPNSIIIDQPNAGASKNPQQLSKLEPSLPSSDKKLNRPSDSQIEISNNQKT). Polar residues-rich tracts occupy residues 946 to 956 (AGASKNPQQLS) and 972 to 985 (PSDS…NQKT).

In Mus musculus (Mouse), this protein is Coiled-coil domain-containing protein 33 (Ccdc33).